A 423-amino-acid polypeptide reads, in one-letter code: MSQRSSELFERAQQLIPGGVNSPVRACLGVDSEPLFIARAAGSRLHTVDGETFIDFVESWGPMLLGHTHPEVTAAVHAAVDRGTSYGAPCEDEVVLAAKVVDALPGVDMVRMVNSGTEATMSALRLARGYTGRTKLVKFVGCYHGHADPFLASAGSGVATLSIPGTPGVPESTVRDTLLAPYNDLAAVKDLFALHGKDIAAIIVEAVAGNMGLVPPKAGFLEGLRELCDQHGALLIFDEVITGFRVSFGGAQQRFGITPDLTTLGKIIGGGLPVGAYGGKREIMQRIAPCGEVYQAGTLSGNPLAMAAGIATLDVLSRSDYAGLEARVAAFVKELEAILKGKGVPVRINTLASMFTVFFTNDPVTDFASAKTADGALYTSFYKQMRAQGIYLAPSPFEAAMVSFAHTDDDLAAMLDAARKVTF.

The residue at position 266 (lysine 266) is an N6-(pyridoxal phosphate)lysine.

The protein belongs to the class-III pyridoxal-phosphate-dependent aminotransferase family. HemL subfamily. In terms of assembly, homodimer. The cofactor is pyridoxal 5'-phosphate.

It localises to the cytoplasm. It catalyses the reaction (S)-4-amino-5-oxopentanoate = 5-aminolevulinate. It participates in porphyrin-containing compound metabolism; protoporphyrin-IX biosynthesis; 5-aminolevulinate from L-glutamyl-tRNA(Glu): step 2/2. The chain is Glutamate-1-semialdehyde 2,1-aminomutase from Nitratidesulfovibrio vulgaris (strain ATCC 29579 / DSM 644 / CCUG 34227 / NCIMB 8303 / VKM B-1760 / Hildenborough) (Desulfovibrio vulgaris).